Consider the following 212-residue polypeptide: Cytidylate kinase (212 aa).

Residue 7 to 15 (GPAASGKGT) participates in ATP binding.

It belongs to the cytidylate kinase family. Type 1 subfamily.

The protein resides in the cytoplasm. The catalysed reaction is CMP + ATP = CDP + ADP. It carries out the reaction dCMP + ATP = dCDP + ADP. The chain is Cytidylate kinase from Bradyrhizobium diazoefficiens (strain JCM 10833 / BCRC 13528 / IAM 13628 / NBRC 14792 / USDA 110).